The primary structure comprises 433 residues: Gamma-glutamyl phosphate reductase (433 aa).

It belongs to the gamma-glutamyl phosphate reductase family.

It is found in the cytoplasm. It carries out the reaction L-glutamate 5-semialdehyde + phosphate + NADP(+) = L-glutamyl 5-phosphate + NADPH + H(+). The protein operates within amino-acid biosynthesis; L-proline biosynthesis; L-glutamate 5-semialdehyde from L-glutamate: step 2/2. Catalyzes the NADPH-dependent reduction of L-glutamate 5-phosphate into L-glutamate 5-semialdehyde and phosphate. The product spontaneously undergoes cyclization to form 1-pyrroline-5-carboxylate. In Psychrobacter cryohalolentis (strain ATCC BAA-1226 / DSM 17306 / VKM B-2378 / K5), this protein is Gamma-glutamyl phosphate reductase.